A 41-amino-acid polypeptide reads, in one-letter code: uncharacterized protein (41 aa).

Residues 8–28 (IKKIAMFFLGILVGVFIVLFF) traverse the membrane as a helical segment.

It localises to the membrane. This is an uncharacterized protein from Streptococcus pneumoniae serotype 2 (strain D39 / NCTC 7466).